A 284-amino-acid polypeptide reads, in one-letter code: Avenin-like b11 (284 aa).

The first 18 residues, 1-18 (MKVFILALLALTATTAIA), serve as a signal peptide directing secretion.

Belongs to the prolamin family. Post-translationally, contains disulfide bonds.

Functionally, seed storage protein. Might be integrated via inter-chain disulfide bonds within the glutenin polymer. The protein is Avenin-like b11 of Triticum aestivum (Wheat).